Consider the following 376-residue polypeptide: MTKKLNPLEDPPTATSSDEDDVETSEAGEASDDSSSSEEDVPIKIRIKSPSATTAAAPPAKSTAVSTAADSDSGSETETDSDSESTNPPNSGSGKTIALNTVNLKKKEDPTSSSATLALPAMKSGTKRPASEAAATTSTKRVKKDEESVKKPGGFQRLWSEEDEILVLQGMIDFKADTGKSPYVDTNAFYDFLKKSISFEVSKNQFMDKIRSLRKKYIGKEGRNEPSFVKAHDKKAFELSKFIWGPKGIALDSNVKSNGVSKKSVAKKKIDSVKQELVFAGGSSTNGKKVEEDGGDDGCDWFDNSSLVRMIASLGVDEYYVKQQWSLVSVESKKIVEEKYKLLQAKELEFVLEKTKFLNEVASMFVEASKNKPLDT.

Positions 1–150 (MTKKLNPLED…RVKKDEESVK (150 aa)) are disordered. Positions 17-40 (SDEDDVETSEAGEASDDSSSSEED) are enriched in acidic residues. Ser49 is modified (phosphoserine). Low complexity predominate over residues 49–72 (SPSATTAAAPPAKSTAVSTAADSD). The segment covering 73 to 83 (SGSETETDSDS) has biased composition (acidic residues). A compositionally biased stretch (polar residues) spans 87 to 103 (NPPNSGSGKTIALNTVN).

Belongs to the GeBP family. As to quaternary structure, interacts with DEK3.

The polypeptide is Probable transcription factor At1g61730 (Arabidopsis thaliana (Mouse-ear cress)).